A 212-amino-acid chain; its full sequence is Thymidylate kinase (212 aa).

10–17 (GLEGAGKT) is a binding site for ATP.

Belongs to the thymidylate kinase family.

The catalysed reaction is dTMP + ATP = dTDP + ADP. Its function is as follows. Phosphorylation of dTMP to form dTDP in both de novo and salvage pathways of dTTP synthesis. This chain is Thymidylate kinase, found in Yersinia enterocolitica serotype O:8 / biotype 1B (strain NCTC 13174 / 8081).